The chain runs to 579 residues: Trehalase (579 aa).

The signal sequence occupies residues 1 to 15 (MRLFLLLVGLTTVIA). N-linked (GlcNAc...) asparagine glycans are attached at residues N29 and N58. Residues R161, 168 to 169 (WD), N205, 214 to 216 (RSQ), 279 to 281 (RPE), and G313 contribute to the substrate site. N205 is a glycosylation site (N-linked (GlcNAc...) asparagine). Residue D315 is the Proton donor/acceptor of the active site. N-linked (GlcNAc...) asparagine glycosylation is present at N331. E513 (proton donor/acceptor) is an active-site residue. Residue E528 participates in substrate binding. Residues 560–569 (DASANNGQSN) show a composition bias toward polar residues. Residues 560–579 (DASANNGQSNEESETDSKEK) are disordered.

The protein belongs to the glycosyl hydrolase 37 family. In terms of tissue distribution, in midgut and Malpighian tubules.

It localises to the basolateral cell membrane. The catalysed reaction is alpha,alpha-trehalose + H2O = alpha-D-glucose + beta-D-glucose. In terms of biological role, involved in uptake of hemolymph trehalose into epithelial cells in the midgut of feeding larvae. In Bombyx mori (Silk moth), this protein is Trehalase.